The primary structure comprises 343 residues: Aspartate carbamoyltransferase catalytic subunit (343 aa).

Positions 91 and 92 each coordinate carbamoyl phosphate. K119 lines the L-aspartate pocket. Carbamoyl phosphate contacts are provided by R141, H171, and Q174. R204 and R259 together coordinate L-aspartate. G300 and P301 together coordinate carbamoyl phosphate.

Belongs to the aspartate/ornithine carbamoyltransferase superfamily. ATCase family. In terms of assembly, heterododecamer (2C3:3R2) of six catalytic PyrB chains organized as two trimers (C3), and six regulatory PyrI chains organized as three dimers (R2).

It carries out the reaction carbamoyl phosphate + L-aspartate = N-carbamoyl-L-aspartate + phosphate + H(+). It participates in pyrimidine metabolism; UMP biosynthesis via de novo pathway; (S)-dihydroorotate from bicarbonate: step 2/3. Its function is as follows. Catalyzes the condensation of carbamoyl phosphate and aspartate to form carbamoyl aspartate and inorganic phosphate, the committed step in the de novo pyrimidine nucleotide biosynthesis pathway. The sequence is that of Aspartate carbamoyltransferase catalytic subunit from Burkholderia multivorans (strain ATCC 17616 / 249).